Here is a 78-residue protein sequence, read N- to C-terminus: Cytochrome c oxidase subunit 6b-3 (78 aa).

In terms of domain architecture, CHCH spans Thr22 to Trp65. Residues Cys25–Cys35 carry the Cx9C motif motif. 2 cysteine pairs are disulfide-bonded: Cys25–Cys57 and Cys35–Cys46. Positions Cys46 to Cys57 match the Cx10C motif motif.

The protein belongs to the cytochrome c oxidase subunit 6B (TC 3.D.4.8) family. As to expression, expressed in the whole plant.

The protein localises to the mitochondrion. This protein is one of the nuclear-coded polypeptide chains of cytochrome c oxidase, the terminal oxidase in mitochondrial electron transport. This protein may be one of the heme-binding subunits of the oxidase. This is Cytochrome c oxidase subunit 6b-3 (COX6B-3) from Arabidopsis thaliana (Mouse-ear cress).